A 546-amino-acid polypeptide reads, in one-letter code: Phosphoglucomutase (546 aa).

Residue Ser135 is the Phosphoserine intermediate of the active site. Residues Ser135, Asp288, Asp290, and Asp292 each coordinate Mg(2+).

Belongs to the phosphohexose mutase family. Requires Mg(2+) as cofactor.

The catalysed reaction is alpha-D-glucose 1-phosphate = alpha-D-glucose 6-phosphate. Its pathway is glycolipid metabolism; diglucosyl-diacylglycerol biosynthesis. Its function is as follows. Catalyzes the interconversion between glucose-6-phosphate and alpha-glucose-1-phosphate. This is the first step in the biosynthesis of diglucosyl-diacylglycerol (Glc2-DAG), i.e. a glycolipid found in the membrane, which is also used as a membrane anchor for lipoteichoic acid (LTA). The polypeptide is Phosphoglucomutase (pgcA) (Staphylococcus epidermidis (strain ATCC 12228 / FDA PCI 1200)).